The sequence spans 874 residues: Cellulose synthase catalytic subunit [UDP-forming] (874 aa).

A run of 4 helical transmembrane segments spans residues 30–50 (SPFSAALGCLWTILAWIVFPL), 151–171 (ILGVIVTFSLILALICITQPF), 173–193 (PLSQFIFLLLLWGVALLVRRM), and 230–250 (LVCGLILLFAETYAWIVLVLG). The tract at residues 271–364 (QWPTVDIFVP…FVAIFDCDHV (94 aa)) is catalytic subdomain A. The active site involves D313. D360 and D362 together coordinate substrate. Residues 441–501 (KPLDEIGGIA…GQRIRWARGM (61 aa)) form a catalytic subdomain B region. D457 is an active-site residue. 5 helical membrane-spanning segments follow: residues 525–545 (LNAMFHFLSGIPRLIFLTAPL), 547–567 (FLLLHAYIIYAPALMIALFVI), 592–612 (IYETVLAWYIAPPTLVALINP), 634–654 (VISRPYIFLVLLNLLGVAAGV), and 668–688 (VIVSLVWVFYNLVILGGAVAV). Positions 694 to 790 (QVRRAHRVEI…QHIDFVQCTF (97 aa)) constitute a PilZ domain. Residues 833–853 (SVKVIFRSLTALIAWIVSFIP) form a helical membrane-spanning segment.

The protein belongs to the glycosyltransferase 2 family. It depends on Mg(2+) as a cofactor.

The protein resides in the cell inner membrane. The enzyme catalyses [(1-&gt;4)-beta-D-glucosyl](n) + UDP-alpha-D-glucose = [(1-&gt;4)-beta-D-glucosyl](n+1) + UDP + H(+). It participates in glycan metabolism; bacterial cellulose biosynthesis. Its activity is regulated as follows. Activated by bis-(3'-5') cyclic diguanylic acid (c-di-GMP). Functionally, catalytic subunit of cellulose synthase. It polymerizes uridine 5'-diphosphate glucose to cellulose, which is produced as an extracellular component for mechanical and chemical protection at the onset of the stationary phase, when the cells exhibit multicellular behavior (rdar morphotype). Coexpression of cellulose and thin aggregative fimbriae leads to a hydrophobic network with tightly packed cells embedded in a highly inert matrix. This is Cellulose synthase catalytic subunit [UDP-forming] (bcsA) from Salmonella typhi.